Consider the following 180-residue polypeptide: NADH-quinone oxidoreductase subunit I (180 aa).

2 consecutive 4Fe-4S ferredoxin-type domains span residues 50–80 (LTRD…LQKA) and 90–119 (EFFR…LTPD). Positions 60, 63, 66, 70, 99, 102, 105, and 109 each coordinate [4Fe-4S] cluster.

Belongs to the complex I 23 kDa subunit family. In terms of assembly, NDH-1 is composed of 13 different subunits. Subunits NuoA, H, J, K, L, M, N constitute the membrane sector of the complex. It depends on [4Fe-4S] cluster as a cofactor.

The protein localises to the cell inner membrane. It carries out the reaction a quinone + NADH + 5 H(+)(in) = a quinol + NAD(+) + 4 H(+)(out). Its function is as follows. NDH-1 shuttles electrons from NADH, via FMN and iron-sulfur (Fe-S) centers, to quinones in the respiratory chain. The immediate electron acceptor for the enzyme in this species is believed to be ubiquinone. Couples the redox reaction to proton translocation (for every two electrons transferred, four hydrogen ions are translocated across the cytoplasmic membrane), and thus conserves the redox energy in a proton gradient. This Yersinia pseudotuberculosis serotype O:1b (strain IP 31758) protein is NADH-quinone oxidoreductase subunit I.